We begin with the raw amino-acid sequence, 339 residues long: Dihydroorotate dehydrogenase (quinone) (339 aa).

FMN-binding positions include 62–66 (AGMDK) and T86. K66 provides a ligand contact to substrate. Substrate is bound at residue 111–115 (NRMGF). 2 residues coordinate FMN: N139 and N172. Substrate is bound at residue N172. S175 (nucleophile) is an active-site residue. Residue N177 coordinates substrate. Residues K217 and T245 each contribute to the FMN site. 246–247 (NT) provides a ligand contact to substrate. FMN contacts are provided by residues G268, G297, and 318-319 (YS).

This sequence belongs to the dihydroorotate dehydrogenase family. Type 2 subfamily. As to quaternary structure, monomer. It depends on FMN as a cofactor.

The protein resides in the cell membrane. The enzyme catalyses (S)-dihydroorotate + a quinone = orotate + a quinol. The protein operates within pyrimidine metabolism; UMP biosynthesis via de novo pathway; orotate from (S)-dihydroorotate (quinone route): step 1/1. Catalyzes the conversion of dihydroorotate to orotate with quinone as electron acceptor. This chain is Dihydroorotate dehydrogenase (quinone), found in Shewanella pealeana (strain ATCC 700345 / ANG-SQ1).